The following is a 420-amino-acid chain: UDP-N-acetylglucosamine 1-carboxyvinyltransferase (420 aa).

22–23 (KN) provides a ligand contact to phosphoenolpyruvate. Arginine 93 contacts UDP-N-acetyl-alpha-D-glucosamine. Catalysis depends on cysteine 117, which acts as the Proton donor. Cysteine 117 carries the post-translational modification 2-(S-cysteinyl)pyruvic acid O-phosphothioketal. 2 residues coordinate UDP-N-acetyl-alpha-D-glucosamine: aspartate 307 and isoleucine 329.

It belongs to the EPSP synthase family. MurA subfamily.

It is found in the cytoplasm. It carries out the reaction phosphoenolpyruvate + UDP-N-acetyl-alpha-D-glucosamine = UDP-N-acetyl-3-O-(1-carboxyvinyl)-alpha-D-glucosamine + phosphate. The protein operates within cell wall biogenesis; peptidoglycan biosynthesis. In terms of biological role, cell wall formation. Adds enolpyruvyl to UDP-N-acetylglucosamine. This chain is UDP-N-acetylglucosamine 1-carboxyvinyltransferase, found in Shewanella halifaxensis (strain HAW-EB4).